The following is a 347-amino-acid chain: Ribosomal RNA large subunit methyltransferase M (347 aa).

S-adenosyl-L-methionine is bound by residues serine 184, 217-220 (APGG), aspartate 236, aspartate 256, and aspartate 272. Lysine 301 acts as the Proton acceptor in catalysis.

The protein belongs to the class I-like SAM-binding methyltransferase superfamily. RNA methyltransferase RlmE family. RlmM subfamily. In terms of assembly, monomer.

The protein resides in the cytoplasm. The catalysed reaction is cytidine(2498) in 23S rRNA + S-adenosyl-L-methionine = 2'-O-methylcytidine(2498) in 23S rRNA + S-adenosyl-L-homocysteine + H(+). Functionally, catalyzes the 2'-O-methylation at nucleotide C2498 in 23S rRNA. The polypeptide is Ribosomal RNA large subunit methyltransferase M (Xanthomonas campestris pv. campestris (strain 8004)).